A 551-amino-acid polypeptide reads, in one-letter code: PA-phosphatase related-family protein DDB_G0268928 (551 aa).

2 stretches are compositionally biased toward polar residues: residues 26 to 47 and 137 to 152; these read TESLSDIDSQTDINNTGNSGKD and KYNTRNSGTLRNSSNK. 2 disordered regions span residues 26–50 and 123–172; these read TESLSDIDSQTDINNTGNSGKDYSS and KGED…NNNN. The span at 153-171 shows a compositional bias: low complexity; sequence TQTTVLNNSTTSSNNINNN. Helical transmembrane passes span 211 to 231, 232 to 252, 273 to 293, 346 to 366, 393 to 413, 474 to 494, and 500 to 520; these read SYSDATFSILSGVVILFSIIY, SLLVGPIQIMFAFLVSILVFI, LAVGLGLTIPSFFAATGAVVL, ILQLSYISYYIWGYFMEIYIL, MFICSWISTYFIVFSINLIFP, ILPAYGFVSTIAAILIAIATM, and YFVDFLAALPVTIFCLLYGGF.

This sequence belongs to the PA-phosphatase related phosphoesterase family.

It is found in the membrane. The sequence is that of PA-phosphatase related-family protein DDB_G0268928 from Dictyostelium discoideum (Social amoeba).